We begin with the raw amino-acid sequence, 390 residues long: L-rhamnonate dehydratase (390 aa).

Residues histidine 19 and arginine 45 each coordinate substrate. Aspartate 211, glutamate 237, and glutamate 265 together coordinate Mg(2+). The active-site Proton acceptor is the histidine 315. Glutamate 335 is a substrate binding site.

This sequence belongs to the mandelate racemase/muconate lactonizing enzyme family. RhamD subfamily. It depends on Mg(2+) as a cofactor.

The enzyme catalyses L-rhamnonate = 2-dehydro-3-deoxy-L-rhamnonate + H2O. Catalyzes the dehydration of L-rhamnonate to 2-keto-3-deoxy-L-rhamnonate (KDR). The sequence is that of L-rhamnonate dehydratase from Saccharopolyspora erythraea (strain ATCC 11635 / DSM 40517 / JCM 4748 / NBRC 13426 / NCIMB 8594 / NRRL 2338).